The primary structure comprises 76 residues: Large ribosomal subunit protein eL29 (76 aa).

The span at 1–29 shows a compositional bias: basic residues; it reads MAKSKNHTNHNQNKKAHRNGIKRPLRKRH. 2 disordered regions span residues 1–33 and 47–76; these read MAKS…ESTL and RKGN…PVTL. S31 is subject to Phosphoserine. Over residues 51–62 the composition is skewed to basic and acidic residues; sequence LSREESVKRYNE.

This sequence belongs to the eukaryotic ribosomal protein eL29 family.

This is Large ribosomal subunit protein eL29 (RpL29) from Drosophila melanogaster (Fruit fly).